The following is a 349-amino-acid chain: Phosphate acyltransferase (349 aa).

It belongs to the PlsX family. Homodimer. Probably interacts with PlsY.

It is found in the cytoplasm. The catalysed reaction is a fatty acyl-[ACP] + phosphate = an acyl phosphate + holo-[ACP]. It participates in lipid metabolism; phospholipid metabolism. Its function is as follows. Catalyzes the reversible formation of acyl-phosphate (acyl-PO(4)) from acyl-[acyl-carrier-protein] (acyl-ACP). This enzyme utilizes acyl-ACP as fatty acyl donor, but not acyl-CoA. This is Phosphate acyltransferase from Albidiferax ferrireducens (strain ATCC BAA-621 / DSM 15236 / T118) (Rhodoferax ferrireducens).